The chain runs to 210 residues: 3-phospho-D-glycerate guanylyltransferase (210 aa).

Belongs to the CofC family.

The enzyme catalyses (2R)-3-phosphoglycerate + GTP + H(+) = 3-[(R)-glyceryl]-diphospho-5'-guanosine + diphosphate. The protein operates within cofactor biosynthesis; coenzyme F420 biosynthesis. Guanylyltransferase that catalyzes the activation of (2R)-3-phosphoglycerate (3PG) as 3-[(R)-glyceryl]-diphospho-5'-guanosine, via the condensation of 3PG with GTP. It is involved in the biosynthesis of a derivative of the hydride carrier cofactor coenzyme F420, 3PG-F420. This Colwellia psychrerythraea (strain 34H / ATCC BAA-681) (Vibrio psychroerythus) protein is 3-phospho-D-glycerate guanylyltransferase.